The following is a 31-amino-acid chain: MKKLERMSEVSQMCSEAKKNRKRMSVVSSVA.

The segment at 1–31 (MKKLERMSEVSQMCSEAKKNRKRMSVVSSVA) is disordered.

This is an uncharacterized protein from Sulfolobus islandicus filamentous virus (isolate Iceland/Hveragerdi) (SIFV).